The sequence spans 657 residues: Putative GreA-associated domains protein (657 aa).

The 152-residue stretch at 1 to 152 folds into the GRAD2 domain; it reads MDTRDLTAYS…EQEGNKEKAT (152 aa). A GRAD1 domain is found at 153–657; sequence EFYKKALYRF…TAGSFGTLWE (505 aa).

This chain is Putative GreA-associated domains protein, found in Treponema pallidum (strain Nichols).